Consider the following 583-residue polypeptide: Afadin- and alpha-actinin-binding protein (583 aa).

Coiled coils occupy residues 108–220, 255–333, and 420–453; these read NNVE…LAIE, DYEA…QLTN, and EEKERLKEEWRLFDEQKRNFEKERKNFTEAAIRL. A disordered region spans residues 285 to 328; that stretch reads LSPCPPLNRGGSAEESQELGDSDREERSAETSRETLDQSCEHAR. A compositionally biased stretch (basic and acidic residues) spans 305 to 328; that stretch reads DSDREERSAETSRETLDQSCEHAR. Residues 480 to 527 form a disordered region; the sequence is DRMRSSSSDGQSALSVKSEPEIRTSSSKAPPVKSSAYTTFSTPKSSKS. Positions 484-494 are enriched in polar residues; the sequence is SSSSDGQSALS. A compositionally biased stretch (low complexity) spans 504–515; that stretch reads SSSKAPPVKSSA. A compositionally biased stretch (polar residues) spans 516–527; that stretch reads YTTFSTPKSSKS.

Belongs to the ADIP family.

It localises to the cell junction. Its subcellular location is the adherens junction. It is found in the cytoplasm. The protein localises to the cytoskeleton. The protein resides in the microtubule organizing center. It localises to the centrosome. Its subcellular location is the centriolar satellite. Its function is as follows. Belongs to an adhesion system, which plays a role in the organization of homotypic, interneuronal and heterotypic cell-cell adherens junctions (AJs). Involved in cell movement. Acts as a centrosome maturation factor, probably by maintaining the integrity of the pericentriolar material and proper microtubule nucleation at mitotic spindle poles. The polypeptide is Afadin- and alpha-actinin-binding protein (ssx2ip) (Oryzias latipes (Japanese rice fish)).